The chain runs to 429 residues: uncharacterized protein (429 aa).

This is an uncharacterized protein from Mycobacterium tuberculosis (strain CDC 1551 / Oshkosh).